The sequence spans 61 residues: Photosystem II reaction center protein K (61 aa).

Positions 1 to 24 (MLNIFNLVCICIHSVLYSSSFFSA) are excised as a propeptide. A helical transmembrane segment spans residues 36-56 (IVDIMPVIPLLFFLLAFVWQA).

Belongs to the PsbK family. PSII is composed of 1 copy each of membrane proteins PsbA, PsbB, PsbC, PsbD, PsbE, PsbF, PsbH, PsbI, PsbJ, PsbK, PsbL, PsbM, PsbT, PsbX, PsbY, PsbZ, Psb30/Ycf12, at least 3 peripheral proteins of the oxygen-evolving complex and a large number of cofactors. It forms dimeric complexes.

The protein resides in the plastid. It is found in the chloroplast thylakoid membrane. One of the components of the core complex of photosystem II (PSII). PSII is a light-driven water:plastoquinone oxidoreductase that uses light energy to abstract electrons from H(2)O, generating O(2) and a proton gradient subsequently used for ATP formation. It consists of a core antenna complex that captures photons, and an electron transfer chain that converts photonic excitation into a charge separation. The protein is Photosystem II reaction center protein K of Glycine max (Soybean).